A 128-amino-acid polypeptide reads, in one-letter code: Large ribosomal subunit protein eL22 (128 aa).

The protein belongs to the eukaryotic ribosomal protein eL22 family. In terms of assembly, component of the large ribosomal subunit.

The protein resides in the cytoplasm. Functionally, component of the large ribosomal subunit. The ribosome is a large ribonucleoprotein complex responsible for the synthesis of proteins in the cell. In Gallus gallus (Chicken), this protein is Large ribosomal subunit protein eL22 (RPL22).